We begin with the raw amino-acid sequence, 353 residues long: Probable protein phosphatase 2C 48 (353 aa).

The region spanning 54–348 (FAAVCSRRGE…DDCSAICLFF (295 aa)) is the PPM-type phosphatase domain. 4 residues coordinate Mn(2+): aspartate 90, glycine 91, aspartate 293, and aspartate 339.

Belongs to the PP2C family. Requires Mg(2+) as cofactor. Mn(2+) serves as cofactor.

The enzyme catalyses O-phospho-L-seryl-[protein] + H2O = L-seryl-[protein] + phosphate. It catalyses the reaction O-phospho-L-threonyl-[protein] + H2O = L-threonyl-[protein] + phosphate. The protein is Probable protein phosphatase 2C 48 of Oryza sativa subsp. japonica (Rice).